The following is a 144-amino-acid chain: Putative RNase YutE (144 aa).

R96 is an active-site residue. Positions 96–103 (RKTLVQQY) match the RX(4)HXY motif motif.

The protein belongs to the HepT RNase toxin family. In terms of assembly, homodimer, probably forms a complex with cognate antitoxin YutD.

In terms of biological role, probable toxic component of a putative type VII toxin-antitoxin (TA) system, probably an RNase. Probably neutralized by cognate antitoxin YutD. This chain is Putative RNase YutE (yutE), found in Bacillus subtilis (strain 168).